The primary structure comprises 264 residues: Pimeloyl-[acyl-carrier protein] methyl ester esterase (264 aa).

One can recognise an AB hydrolase-1 domain in the interval 23–244 (LVMLHGWGVN…MLAKASHAPF (222 aa)). Substrate-binding positions include Trp-29, 87-88 (SL), and 150-154 (FLAIQ). Ser-87 (nucleophile) is an active-site residue. Active-site residues include Asp-214 and His-241. His-241 contacts substrate.

It belongs to the AB hydrolase superfamily. Carboxylesterase BioH family. Monomer.

It is found in the cytoplasm. It catalyses the reaction 6-carboxyhexanoyl-[ACP] methyl ester + H2O = 6-carboxyhexanoyl-[ACP] + methanol + H(+). The protein operates within cofactor biosynthesis; biotin biosynthesis. In terms of biological role, the physiological role of BioH is to remove the methyl group introduced by BioC when the pimeloyl moiety is complete. It allows to synthesize pimeloyl-ACP via the fatty acid synthetic pathway through the hydrolysis of the ester bonds of pimeloyl-ACP esters. The polypeptide is Pimeloyl-[acyl-carrier protein] methyl ester esterase (Shewanella sp. (strain MR-7)).